We begin with the raw amino-acid sequence, 89 residues long: MALSKEQKTETLKEFGLHETDTGSPEAQIALLTVRIRQLTEHLKYHKHDHHSRRGLLLLVGRRKGLLKYLAENNVDRYRSLIERLGLRR.

Over residues 1-21 (MALSKEQKTETLKEFGLHETD) the composition is skewed to basic and acidic residues. Residues 1-22 (MALSKEQKTETLKEFGLHETDT) form a disordered region.

Belongs to the universal ribosomal protein uS15 family. As to quaternary structure, part of the 30S ribosomal subunit. Forms a bridge to the 50S subunit in the 70S ribosome, contacting the 23S rRNA.

In terms of biological role, one of the primary rRNA binding proteins, it binds directly to 16S rRNA where it helps nucleate assembly of the platform of the 30S subunit by binding and bridging several RNA helices of the 16S rRNA. Functionally, forms an intersubunit bridge (bridge B4) with the 23S rRNA of the 50S subunit in the ribosome. The protein is Small ribosomal subunit protein uS15 of Corynebacterium jeikeium (strain K411).